The sequence spans 139 residues: D-ribose pyranase (139 aa).

Catalysis depends on His-20, which acts as the Proton donor. Residues Asp-28, His-106, and 128 to 130 (YAN) each bind substrate.

Belongs to the RbsD / FucU family. RbsD subfamily. Homodecamer.

The protein resides in the cytoplasm. The catalysed reaction is beta-D-ribopyranose = beta-D-ribofuranose. Its pathway is carbohydrate metabolism; D-ribose degradation; D-ribose 5-phosphate from beta-D-ribopyranose: step 1/2. Its function is as follows. Catalyzes the interconversion of beta-pyran and beta-furan forms of D-ribose. This chain is D-ribose pyranase, found in Vibrio parahaemolyticus serotype O3:K6 (strain RIMD 2210633).